The chain runs to 427 residues: Histidine--tRNA ligase (427 aa).

The protein belongs to the class-II aminoacyl-tRNA synthetase family. Homodimer.

It localises to the cytoplasm. The enzyme catalyses tRNA(His) + L-histidine + ATP = L-histidyl-tRNA(His) + AMP + diphosphate + H(+). The polypeptide is Histidine--tRNA ligase (Alteromonas mediterranea (strain DSM 17117 / CIP 110805 / LMG 28347 / Deep ecotype)).